Here is a 224-residue protein sequence, read N- to C-terminus: Heme response regulator HssR (224 aa).

The Response regulatory domain maps to 3–116 (QCLVVDDDSR…ELIFRIRAVL (114 aa)). Asp-52 is subject to 4-aspartylphosphate. A DNA-binding region (ompR/PhoB-type) is located at residues 124–222 (NSEMTIGNLT…VRGQGYKVEN (99 aa)).

Phosphorylated by HssS.

It localises to the cytoplasm. Functionally, member of the two-component regulatory system HssS/HssR involved in intracellular heme homeostasis and tempering of staphylococcal virulence. Phosphorylated HssR binds to a direct repeat sequence within hrtAB promoter and activates the expression of hrtAB, an efflux pump, in response to extracellular heme, hemin, hemoglobin or blood. The chain is Heme response regulator HssR (hssR) from Staphylococcus aureus (strain bovine RF122 / ET3-1).